The following is a 488-amino-acid chain: H2.0-like homeobox protein (488 aa).

2 disordered regions span residues A118 to D173 and W331 to L488. 2 stretches are compositionally biased toward low complexity: residues Q125–Q135 and P158–S171. Positions R276–K335 form a DNA-binding region, homeobox. 2 stretches are compositionally biased toward basic and acidic residues: residues S334 to E349 and D363 to G372. The segment covering E373 to S383 has biased composition (acidic residues). Over residues D390–L401 the composition is skewed to basic and acidic residues. Residues G422–N432 are compositionally biased toward gly residues. Residues S433–S454 are compositionally biased toward low complexity.

The protein belongs to the H2.0 homeobox family. As to expression, low level in normal B and T-cells, high level in activated lymphocytes and monocytes. Also found in thymus, tonsil, bone marrow, developing vessels, and fetal brain.

It localises to the nucleus. Transcription factor required for TBX21/T-bet-dependent maturation of Th1 cells as well as maintenance of Th1-specific gene expression. Involved in embryogenesis and hematopoiesis. This chain is H2.0-like homeobox protein (HLX), found in Homo sapiens (Human).